Reading from the N-terminus, the 294-residue chain is Phosphatidylglycerol--prolipoprotein diacylglyceryl transferase (294 aa).

The next 7 helical transmembrane spans lie at 19-39 (VFGFDLALRWYALAYIVGIVL), 69-89 (LLTWVIVGVILGGRLGYVFFY), 101-121 (ILAVWQGGMAFHGGLLGVIAA), 139-159 (IMALGVPPGLLLGRIANFINA), 195-215 (QLYEAGLEGLILGALLIWLVW), 224-244 (GYVAGVFFAGYGVSRFFVEFF), and 267-287 (WGLTMGQCLSLPMILLGIWLI). Arg-152 contacts a 1,2-diacyl-sn-glycero-3-phospho-(1'-sn-glycerol).

The protein belongs to the Lgt family.

It localises to the cell inner membrane. It catalyses the reaction L-cysteinyl-[prolipoprotein] + a 1,2-diacyl-sn-glycero-3-phospho-(1'-sn-glycerol) = an S-1,2-diacyl-sn-glyceryl-L-cysteinyl-[prolipoprotein] + sn-glycerol 1-phosphate + H(+). The protein operates within protein modification; lipoprotein biosynthesis (diacylglyceryl transfer). Functionally, catalyzes the transfer of the diacylglyceryl group from phosphatidylglycerol to the sulfhydryl group of the N-terminal cysteine of a prolipoprotein, the first step in the formation of mature lipoproteins. This Roseobacter denitrificans (strain ATCC 33942 / OCh 114) (Erythrobacter sp. (strain OCh 114)) protein is Phosphatidylglycerol--prolipoprotein diacylglyceryl transferase.